The following is a 54-amino-acid chain: MTEKKQQNKPNENPEHNDLTDPIPNEELKENMNDEKHKRQQRDNSQSERDYDTK.

Composition is skewed to basic and acidic residues over residues 1-19 (MTEK…HNDL) and 26-54 (EELK…YDTK). Residues 1–54 (MTEKKQQNKPNENPEHNDLTDPIPNEELKENMNDEKHKRQQRDNSQSERDYDTK) are disordered.

This is an uncharacterized protein from Bacillus subtilis (strain 168).